A 236-amino-acid chain; its full sequence is tRNA1(Val) (adenine(37)-N6)-methyltransferase (236 aa).

This sequence belongs to the methyltransferase superfamily. tRNA (adenine-N(6)-)-methyltransferase family.

The protein localises to the cytoplasm. It carries out the reaction adenosine(37) in tRNA1(Val) + S-adenosyl-L-methionine = N(6)-methyladenosine(37) in tRNA1(Val) + S-adenosyl-L-homocysteine + H(+). Functionally, specifically methylates the adenine in position 37 of tRNA(1)(Val) (anticodon cmo5UAC). This chain is tRNA1(Val) (adenine(37)-N6)-methyltransferase, found in Actinobacillus succinogenes (strain ATCC 55618 / DSM 22257 / CCUG 43843 / 130Z).